We begin with the raw amino-acid sequence, 291 residues long: MTVDSKPQLQRLAADVDVDLMCRLLEEDGAFILKDLLPLDVVESFNRELDVQMAIPPPKGERLLADKYPPHFKYVPNVATTCPTFRNNILINPVIHAICEGYFQRTGDYWLSAAFLREIESGMPAQPFHRDDATHPLMHHQPLEAPPISLSVIFPLTEFTEENGATEVILGSHRWMEVGTPERDQAVLATMDPGDVLVVRQRVVHAGGGNRTTTGDPRRVVLAYFNSCQLTPFETYRTMPRETVESMTVLGQRMLGWRTMKPSDPNIVGINIIDDKRLENVLQLKATDLPA.

It belongs to the PhyH family. As to quaternary structure, homodimer. Requires Fe cation as cofactor.

It carries out the reaction fumitremorgin B + 2-oxoglutarate + AH2 + 2 O2 = verruculogen + succinate + A + CO2 + H2O. The protein operates within mycotoxin biosynthesis. Functionally, verruculogen synthase; part of the gene cluster that mediates the biosynthesis of fumitremorgins, indole alkaloids that carry not only intriguing chemical structures, but also interesting biological and pharmacological activities. The biosynthesis of fumitremorgin-type alkaloids begins by condensation of the two amino acids L-tryptophan and L-proline to brevianamide F, catalyzed by the non-ribosomal peptide synthetase ftmPS/ftmA. Brevianamide F is then prenylated by the prenyltransferase ftmPT1/ftmB in the presence of dimethylallyl diphosphate, resulting in the formation of tryprostatin B. The three cytochrome P450 monooxygenases, ftmP450-1/ftmC, ftmP450-2/ftmE and ftmP450-3/FtmG, are responsible for the conversion of tryprostatin B to 6-hydroxytryprostatin B, tryprostatin A to fumitremorgin C and fumitremorgin C to 12,13-dihydroxyfumitremorgin C, respectively. The putative methyltransferase ftmMT/ftmD is expected for the conversion of 6-hydroxytryprostatin B to tryprostatin A. FtmPT2/FtmH catalyzes the prenylation of 12,13-dihydroxyfumitre-morgin C in the presence of dimethylallyl diphosphate, resulting in the formation of fumitremorgin B. Fumitremorgin B is further converted to verruculogen by ftmOx1/ftmF via the insertion of an endoperoxide bond between the two prenyl moieties. Finally, verruculogen is further converted to fumitremorgin A by the verruculogen prenyltransferase ftmPT3. This Neosartorya fischeri (strain ATCC 1020 / DSM 3700 / CBS 544.65 / FGSC A1164 / JCM 1740 / NRRL 181 / WB 181) (Aspergillus fischerianus) protein is Verruculogen synthase.